The following is a 187-amino-acid chain: Elongation factor P (187 aa).

The protein belongs to the elongation factor P family.

The protein resides in the cytoplasm. Its pathway is protein biosynthesis; polypeptide chain elongation. In terms of biological role, involved in peptide bond synthesis. Stimulates efficient translation and peptide-bond synthesis on native or reconstituted 70S ribosomes in vitro. Probably functions indirectly by altering the affinity of the ribosome for aminoacyl-tRNA, thus increasing their reactivity as acceptors for peptidyl transferase. This chain is Elongation factor P, found in Rhizorhabdus wittichii (strain DSM 6014 / CCUG 31198 / JCM 15750 / NBRC 105917 / EY 4224 / RW1) (Sphingomonas wittichii).